The following is a 284-amino-acid chain: D-tagatose-1,6-bisphosphate aldolase subunit GatY (284 aa).

Asp-82 (proton donor) is an active-site residue. Zn(2+) is bound by residues His-83 and His-180. Residue Gly-181 coordinates dihydroxyacetone phosphate. Residue His-208 participates in Zn(2+) binding. Residues 209–211 (GAS) and 230–233 (NVAT) contribute to the dihydroxyacetone phosphate site.

Belongs to the class II fructose-bisphosphate aldolase family. TagBP aldolase GatY subfamily. As to quaternary structure, forms a complex with GatZ. The cofactor is Zn(2+).

The catalysed reaction is D-tagatofuranose 1,6-bisphosphate = D-glyceraldehyde 3-phosphate + dihydroxyacetone phosphate. The protein operates within carbohydrate metabolism; D-tagatose 6-phosphate degradation; D-glyceraldehyde 3-phosphate and glycerone phosphate from D-tagatose 6-phosphate: step 2/2. Its function is as follows. Catalytic subunit of the tagatose-1,6-bisphosphate aldolase GatYZ, which catalyzes the reversible aldol condensation of dihydroxyacetone phosphate (DHAP or glycerone-phosphate) with glyceraldehyde 3-phosphate (G3P) to produce tagatose 1,6-bisphosphate (TBP). Requires GatZ subunit for full activity and stability. Is involved in the catabolism of galactitol. The protein is D-tagatose-1,6-bisphosphate aldolase subunit GatY of Shigella dysenteriae serotype 1 (strain Sd197).